Here is a 334-residue protein sequence, read N- to C-terminus: Gap junction alpha-2 protein (334 aa).

Topologically, residues 1-12 (MAGWELLKLLLD) are cytoplasmic. A helical transmembrane segment spans residues 13-35 (DVQEHSTLIGKVWLTVLFIFRIF). The Extracellular segment spans residues 36-75 (ILSVAGESVWTDEQSDFICNTQQPGCTNVCYDQAFPISHV). The helical transmembrane segment at 76-98 (RYWVLQFLFVSTPTLIYLGHMVY) threads the bilayer. Residues 99 to 153 (LSKKEEKERQKENESRILVANEAQTEVHSSATKKIRIQGPLMCTYTTSVVFKSIF) are Cytoplasmic-facing. Residues 154–176 (EAGFLLGQWYIYGFVMSPIFVCE) traverse the membrane as a helical segment. Residues 177-207 (RIPCKHKVECFVSRPMEKTIFIIFMLVVSLI) are Extracellular-facing. The chain crosses the membrane as a helical span at residues 208 to 230 (SLLLNLMELIHLSFKCFQHGIKE). Over 231 to 334 (GATCSPTGIP…HQTSSKQQYV (104 aa)) the chain is Cytoplasmic.

It belongs to the connexin family. Alpha-type (group II) subfamily. As to quaternary structure, a connexon is composed of a hexamer of connexins. As to expression, resides primarily in the ovary, oocytes and early embryos.

The protein resides in the cell membrane. It is found in the cell junction. It localises to the gap junction. Its function is as follows. One gap junction consists of a cluster of closely packed pairs of transmembrane channels, the connexons, through which materials of low MW diffuse from one cell to a neighboring cell. The polypeptide is Gap junction alpha-2 protein (gja2) (Xenopus laevis (African clawed frog)).